Here is a 275-residue protein sequence, read N- to C-terminus: NH(3)-dependent NAD(+) synthetase (275 aa).

Residue 47–54 (GISGGQDS) coordinates ATP. D53 is a binding site for Mg(2+). A deamido-NAD(+)-binding site is contributed by R141. Residue T161 coordinates ATP. E166 is a binding site for Mg(2+). Deamido-NAD(+)-binding residues include K174 and D181. ATP-binding residues include K190 and T212. Position 261–262 (261–262 (HK)) interacts with deamido-NAD(+).

This sequence belongs to the NAD synthetase family. Homodimer.

The catalysed reaction is deamido-NAD(+) + NH4(+) + ATP = AMP + diphosphate + NAD(+) + H(+). It functions in the pathway cofactor biosynthesis; NAD(+) biosynthesis; NAD(+) from deamido-NAD(+) (ammonia route): step 1/1. In terms of biological role, catalyzes the ATP-dependent amidation of deamido-NAD to form NAD. Uses ammonia as a nitrogen source. The chain is NH(3)-dependent NAD(+) synthetase from Enterococcus faecalis (strain ATCC 700802 / V583).